Here is a 91-residue protein sequence, read N- to C-terminus: UPF0250 protein BP0104 (91 aa).

This sequence belongs to the UPF0250 family.

This Bordetella pertussis (strain Tohama I / ATCC BAA-589 / NCTC 13251) protein is UPF0250 protein BP0104.